We begin with the raw amino-acid sequence, 318 residues long: Olfactory receptor 56A1 (318 aa).

The Extracellular segment spans residues 1–32; that stretch reads MIQPMASPSNSSTVPVSEFLLICFPNFQSWQH. The N-linked (GlcNAc...) asparagine glycan is linked to Asn-10. A helical membrane pass occupies residues 33-53; the sequence is WLSLPLSLLFLLAMGANTTLL. At 54-61 the chain is on the cytoplasmic side; it reads ITIQLEAS. A helical membrane pass occupies residues 62 to 82; it reads LHQPLYYLLSLLSLLDIVLCL. At 83-106 the chain is on the extracellular side; the sequence is TVIPKVLAIFWYDLRSISFPACFL. A disulfide bond links Cys-104 and Cys-196. The chain crosses the membrane as a helical span at residues 107–127; sequence QMFIMNSFLPMESCTFMVMAY. At 128–146 the chain is on the cytoplasmic side; that stretch reads DRYVAICHPLRYPSIITNQ. Residues 147–167 traverse the membrane as a helical segment; sequence FVAKASVFIVVRNALLTAPIP. Residues 168 to 203 lie on the Extracellular side of the membrane; the sequence is ILTSLLHYCGENVIENCICANLSVSRLSCDNFTLNR. Asn-188 and Asn-198 each carry an N-linked (GlcNAc...) asparagine glycan. The chain crosses the membrane as a helical span at residues 204-224; that stretch reads IYQFVAGWTLLGSDLFLIFLS. At 225-244 the chain is on the cytoplasmic side; the sequence is YTFILRAVLRFKAEGAAVKA. Residues 245 to 265 traverse the membrane as a helical segment; the sequence is LSTCGSHFILILFFSTILLVV. The Extracellular portion of the chain corresponds to 266-280; the sequence is VLTNVARKKVPMDIL. A helical membrane pass occupies residues 281–301; sequence ILLNVLHHLIPPALNPIVYGV. Residues 302 to 318 lie on the Cytoplasmic side of the membrane; sequence RTKEIKQGIQKLLQRGR.

The protein belongs to the G-protein coupled receptor 1 family.

It is found in the cell membrane. Its function is as follows. Odorant receptor. The chain is Olfactory receptor 56A1 (OR56A1) from Homo sapiens (Human).